We begin with the raw amino-acid sequence, 484 residues long: Probable receptor-like protein kinase At5g18500 (484 aa).

A helical transmembrane segment spans residues 21–41; that stretch reads IIVIVLSAIFVVVLAISLWLT. Positions 72 to 135 are disordered; sequence RVDEVSSSNG…SVSSANPLTA (64 aa). The span at 91-105 shows a compositional bias: basic and acidic residues; the sequence is KFGDKEPEKGIKAES. The segment covering 125-134 has biased composition (polar residues); it reads SSVSSANPLT. T155 is subject to Phosphothreonine. One can recognise a Protein kinase domain in the interval 166–445; that stretch reads FSRDNIIGDG…MLESEEYPIA (280 aa). Residues 172 to 180 and K194 each bind ATP; that span reads IGDGGYGVV. Position 239 is a phosphotyrosine (Y239). D292 functions as the Proton acceptor in the catalytic mechanism. Position 296 is a phosphoserine (S296). Phosphothreonine occurs at positions 326 and 331. Position 339 is a phosphotyrosine (Y339). The disordered stretch occupies residues 425 to 484; the sequence is EKRPRMSQVARMLESEEYPIAREDRRRRRSQNGTTRDSDPPRNSTDTDKSEYHDLKPEGG. Basic and acidic residues predominate over residues 460-484; the sequence is RDSDPPRNSTDTDKSEYHDLKPEGG.

The protein belongs to the protein kinase superfamily. Ser/Thr protein kinase family.

It localises to the cell membrane. It carries out the reaction L-seryl-[protein] + ATP = O-phospho-L-seryl-[protein] + ADP + H(+). The catalysed reaction is L-threonyl-[protein] + ATP = O-phospho-L-threonyl-[protein] + ADP + H(+). This Arabidopsis thaliana (Mouse-ear cress) protein is Probable receptor-like protein kinase At5g18500.